The chain runs to 68 residues: Large ribosomal subunit protein uL29 (68 aa).

The protein belongs to the universal ribosomal protein uL29 family.

This is Large ribosomal subunit protein uL29 from Parvibaculum lavamentivorans (strain DS-1 / DSM 13023 / NCIMB 13966).